The primary structure comprises 419 residues: Adenylosuccinate synthetase (419 aa).

Residues 11 to 17 (GDEGKGK) and 39 to 41 (GHT) each bind GTP. Catalysis depends on aspartate 12, which acts as the Proton acceptor. Mg(2+) is bound by residues aspartate 12 and glycine 39. Residues 12-15 (DEGK), 37-40 (NAGH), threonine 129, arginine 143, asparagine 218, threonine 233, and arginine 297 each bind IMP. Histidine 40 functions as the Proton donor in the catalytic mechanism. 293–299 (VTTGRKR) lines the substrate pocket. Residues arginine 299, 325–327 (KLD), and 407–409 (GTG) contribute to the GTP site.

Belongs to the adenylosuccinate synthetase family. Homodimer. It depends on Mg(2+) as a cofactor.

Its subcellular location is the cytoplasm. It carries out the reaction IMP + L-aspartate + GTP = N(6)-(1,2-dicarboxyethyl)-AMP + GDP + phosphate + 2 H(+). It functions in the pathway purine metabolism; AMP biosynthesis via de novo pathway; AMP from IMP: step 1/2. Its function is as follows. Plays an important role in the de novo pathway and in the salvage pathway of purine nucleotide biosynthesis. Catalyzes the first committed step in the biosynthesis of AMP from IMP. The protein is Adenylosuccinate synthetase of Coccidioides posadasii (strain C735) (Valley fever fungus).